Here is a 232-residue protein sequence, read N- to C-terminus: Phosphatidylserine decarboxylase proenzyme (232 aa).

The active-site Schiff-base intermediate with substrate; via pyruvic acid is the Ser-190. Pyruvic acid (Ser); by autocatalysis is present on Ser-190.

This sequence belongs to the phosphatidylserine decarboxylase family. PSD-A subfamily. As to quaternary structure, heterodimer of a large membrane-associated beta subunit and a small pyruvoyl-containing alpha subunit. It depends on pyruvate as a cofactor. Post-translationally, is synthesized initially as an inactive proenzyme. Formation of the active enzyme involves a self-maturation process in which the active site pyruvoyl group is generated from an internal serine residue via an autocatalytic post-translational modification. Two non-identical subunits are generated from the proenzyme in this reaction, and the pyruvate is formed at the N-terminus of the alpha chain, which is derived from the carboxyl end of the proenzyme. The post-translation cleavage follows an unusual pathway, termed non-hydrolytic serinolysis, in which the side chain hydroxyl group of the serine supplies its oxygen atom to form the C-terminus of the beta chain, while the remainder of the serine residue undergoes an oxidative deamination to produce ammonia and the pyruvoyl prosthetic group on the alpha chain.

It is found in the cell membrane. The catalysed reaction is a 1,2-diacyl-sn-glycero-3-phospho-L-serine + H(+) = a 1,2-diacyl-sn-glycero-3-phosphoethanolamine + CO2. It participates in phospholipid metabolism; phosphatidylethanolamine biosynthesis; phosphatidylethanolamine from CDP-diacylglycerol: step 2/2. Catalyzes the formation of phosphatidylethanolamine (PtdEtn) from phosphatidylserine (PtdSer). This chain is Phosphatidylserine decarboxylase proenzyme, found in Beijerinckia indica subsp. indica (strain ATCC 9039 / DSM 1715 / NCIMB 8712).